A 157-amino-acid chain; its full sequence is Protein Smg homolog (157 aa).

It belongs to the Smg family.

This Xanthomonas oryzae pv. oryzae (strain MAFF 311018) protein is Protein Smg homolog.